Reading from the N-terminus, the 101-residue chain is MARRSLSNRQARREELVARHADRRAELKRLIAHPDTDPDVRADAVRQLARLPRDSSPVRLRNRDVIDGRPRGVLTRFGLSRVRFREMALRGELPGIRKASW.

The protein belongs to the universal ribosomal protein uS14 family. Part of the 30S ribosomal subunit. Contacts proteins S3 and S10.

In terms of biological role, binds 16S rRNA, required for the assembly of 30S particles and may also be responsible for determining the conformation of the 16S rRNA at the A site. The polypeptide is Small ribosomal subunit protein uS14A (Salinispora tropica (strain ATCC BAA-916 / DSM 44818 / JCM 13857 / NBRC 105044 / CNB-440)).